The chain runs to 96 residues: Co-chaperonin GroES (96 aa).

This sequence belongs to the GroES chaperonin family. Heptamer of 7 subunits arranged in a ring. Interacts with the chaperonin GroEL.

It is found in the cytoplasm. Functionally, together with the chaperonin GroEL, plays an essential role in assisting protein folding. The GroEL-GroES system forms a nano-cage that allows encapsulation of the non-native substrate proteins and provides a physical environment optimized to promote and accelerate protein folding. GroES binds to the apical surface of the GroEL ring, thereby capping the opening of the GroEL channel. This Methylorubrum populi (strain ATCC BAA-705 / NCIMB 13946 / BJ001) (Methylobacterium populi) protein is Co-chaperonin GroES.